The primary structure comprises 88 residues: MAKEELIEMQGSVTEVLPDSRFRVTLDNGHQLIAYTGGKMRKHHIRILAGDKVSLEMSPYDLTKGRITFRHLAGRGPGPGTGSSSGNR.

The region spanning 1–72 (MAKEELIEMQ…TKGRITFRHL (72 aa)) is the S1-like domain.

The protein belongs to the IF-1 family. In terms of assembly, component of the 30S ribosomal translation pre-initiation complex which assembles on the 30S ribosome in the order IF-2 and IF-3, IF-1 and N-formylmethionyl-tRNA(fMet); mRNA recruitment can occur at any time during PIC assembly.

It is found in the cytoplasm. Functionally, one of the essential components for the initiation of protein synthesis. Stabilizes the binding of IF-2 and IF-3 on the 30S subunit to which N-formylmethionyl-tRNA(fMet) subsequently binds. Helps modulate mRNA selection, yielding the 30S pre-initiation complex (PIC). Upon addition of the 50S ribosomal subunit IF-1, IF-2 and IF-3 are released leaving the mature 70S translation initiation complex. This is Translation initiation factor IF-1 2 from Acidovorax sp. (strain JS42).